A 703-amino-acid chain; its full sequence is UvrABC system protein B (703 aa).

Residues 33–190 (TRIENGENDV…RRFVAMQYKR (158 aa)) form the Helicase ATP-binding domain. Position 46–53 (46–53 (GATGTGKT)) interacts with ATP. Positions 99 to 122 (YYDYYQPEAYIPQTDTYIEKDSNI) match the Beta-hairpin motif. The 154-residue stretch at 436–589 (QIDDLLAEIK…QIAYNQEHGI (154 aa)) folds into the Helicase C-terminal domain. The UVR domain occupies 659 to 694 (ADLIRQLSEQMHTAAEQLQFELAARLRDEIRDLKKE).

This sequence belongs to the UvrB family. As to quaternary structure, forms a heterotetramer with UvrA during the search for lesions. Interacts with UvrC in an incision complex.

It localises to the cytoplasm. Its function is as follows. The UvrABC repair system catalyzes the recognition and processing of DNA lesions. A damage recognition complex composed of 2 UvrA and 2 UvrB subunits scans DNA for abnormalities. Upon binding of the UvrA(2)B(2) complex to a putative damaged site, the DNA wraps around one UvrB monomer. DNA wrap is dependent on ATP binding by UvrB and probably causes local melting of the DNA helix, facilitating insertion of UvrB beta-hairpin between the DNA strands. Then UvrB probes one DNA strand for the presence of a lesion. If a lesion is found the UvrA subunits dissociate and the UvrB-DNA preincision complex is formed. This complex is subsequently bound by UvrC and the second UvrB is released. If no lesion is found, the DNA wraps around the other UvrB subunit that will check the other stand for damage. The protein is UvrABC system protein B of Bifidobacterium longum subsp. infantis (strain ATCC 15697 / DSM 20088 / JCM 1222 / NCTC 11817 / S12).